A 192-amino-acid chain; its full sequence is UPF0312 protein Ent638_1570 (192 aa).

Residues 1-22 (MKKRLLGIALGSLLFTTGSAVA) form the signal peptide.

This sequence belongs to the UPF0312 family. Type 1 subfamily.

It localises to the periplasm. In Enterobacter sp. (strain 638), this protein is UPF0312 protein Ent638_1570.